A 360-amino-acid chain; its full sequence is Peptide chain release factor 1 (360 aa).

Residue glutamine 235 is modified to N5-methylglutamine. A disordered region spans residues 285-313 (KRQQAEASTRRNLLGSGDRSDRNRTYNFP).

The protein belongs to the prokaryotic/mitochondrial release factor family. Methylated by PrmC. Methylation increases the termination efficiency of RF1.

It is found in the cytoplasm. Its function is as follows. Peptide chain release factor 1 directs the termination of translation in response to the peptide chain termination codons UAG and UAA. This Enterobacter sp. (strain 638) protein is Peptide chain release factor 1.